The sequence spans 343 residues: Aspartate carbamoyltransferase catalytic subunit (343 aa).

Residues Arg91 and Thr92 each coordinate carbamoyl phosphate. Lys119 contacts L-aspartate. Residues Arg141, His171, and Gln174 each coordinate carbamoyl phosphate. L-aspartate-binding residues include Arg204 and Arg259. Gly300 and Pro301 together coordinate carbamoyl phosphate.

The protein belongs to the aspartate/ornithine carbamoyltransferase superfamily. ATCase family. As to quaternary structure, heterododecamer (2C3:3R2) of six catalytic PyrB chains organized as two trimers (C3), and six regulatory PyrI chains organized as three dimers (R2).

The catalysed reaction is carbamoyl phosphate + L-aspartate = N-carbamoyl-L-aspartate + phosphate + H(+). The protein operates within pyrimidine metabolism; UMP biosynthesis via de novo pathway; (S)-dihydroorotate from bicarbonate: step 2/3. In terms of biological role, catalyzes the condensation of carbamoyl phosphate and aspartate to form carbamoyl aspartate and inorganic phosphate, the committed step in the de novo pyrimidine nucleotide biosynthesis pathway. The polypeptide is Aspartate carbamoyltransferase catalytic subunit (Burkholderia vietnamiensis (strain G4 / LMG 22486) (Burkholderia cepacia (strain R1808))).